Here is a 632-residue protein sequence, read N- to C-terminus: tRNA uridine 5-carboxymethylaminomethyl modification enzyme MnmG (632 aa).

14-19 (GAGHAG) provides a ligand contact to FAD. 273 to 287 (GPRYCPSFEDKIMRF) contacts NAD(+).

This sequence belongs to the MnmG family. As to quaternary structure, homodimer. Heterotetramer of two MnmE and two MnmG subunits. FAD serves as cofactor.

It is found in the cytoplasm. NAD-binding protein involved in the addition of a carboxymethylaminomethyl (cmnm) group at the wobble position (U34) of certain tRNAs, forming tRNA-cmnm(5)s(2)U34. The protein is tRNA uridine 5-carboxymethylaminomethyl modification enzyme MnmG of Clostridium novyi (strain NT).